The following is a 150-amino-acid chain: Ribonuclease H (150 aa).

Residues 1 to 142 form the RNase H type-1 domain; the sequence is MSDSVEIFTD…ADQLANRGVD (142 aa). Residues D10, E48, D70, and D134 each coordinate Mg(2+).

It belongs to the RNase H family. In terms of assembly, monomer. The cofactor is Mg(2+).

The protein localises to the cytoplasm. The enzyme catalyses Endonucleolytic cleavage to 5'-phosphomonoester.. Endonuclease that specifically degrades the RNA of RNA-DNA hybrids. This is Ribonuclease H from Pseudomonas fluorescens (strain ATCC BAA-477 / NRRL B-23932 / Pf-5).